Reading from the N-terminus, the 212-residue chain is MKLSKYIDHTLLKPQATEKDILKLIEEAKTYDFASVCVNPSWVKLAYENLKDTDVKVCTVVGFPLGATSTASKVYETKVAIKDGADEIDMVISVGQLKSGNDEYVKEEIKKIVEASKNKLVKVIIETCLLTEEEKVKACTLSKEAGADYVKTSTGFSTGGAKPEDIKLMRETVGKDMGVKASGGIHTREEMEVMIENGATRIGASCGVELVK.

The Proton donor/acceptor role is filled by aspartate 89. Lysine 151 (schiff-base intermediate with acetaldehyde) is an active-site residue. Lysine 180 acts as the Proton donor/acceptor in catalysis.

It belongs to the DeoC/FbaB aldolase family. DeoC type 1 subfamily.

The protein localises to the cytoplasm. The catalysed reaction is 2-deoxy-D-ribose 5-phosphate = D-glyceraldehyde 3-phosphate + acetaldehyde. It participates in carbohydrate degradation; 2-deoxy-D-ribose 1-phosphate degradation; D-glyceraldehyde 3-phosphate and acetaldehyde from 2-deoxy-alpha-D-ribose 1-phosphate: step 2/2. Functionally, catalyzes a reversible aldol reaction between acetaldehyde and D-glyceraldehyde 3-phosphate to generate 2-deoxy-D-ribose 5-phosphate. The chain is Deoxyribose-phosphate aldolase from Clostridium botulinum (strain ATCC 19397 / Type A).